Here is a 190-residue protein sequence, read N- to C-terminus: Isopentenyl-diphosphate Delta-isomerase (190 aa).

Residues His-27 and His-34 each coordinate Mn(2+). The 140-residue stretch at Pro-32–Asp-171 folds into the Nudix hydrolase domain. Cys-69 is an active-site residue. Cys-69 contacts Mg(2+). His-71 provides a ligand contact to Mn(2+). Residue Glu-89 participates in Mg(2+) binding. Glu-119 and Glu-121 together coordinate Mn(2+). Glu-121 is a catalytic residue.

It belongs to the IPP isomerase type 1 family. Mg(2+) serves as cofactor. Mn(2+) is required as a cofactor.

It is found in the cytoplasm. It carries out the reaction isopentenyl diphosphate = dimethylallyl diphosphate. The protein operates within isoprenoid biosynthesis; dimethylallyl diphosphate biosynthesis; dimethylallyl diphosphate from isopentenyl diphosphate: step 1/1. Catalyzes the 1,3-allylic rearrangement of the homoallylic substrate isopentenyl (IPP) to its highly electrophilic allylic isomer, dimethylallyl diphosphate (DMAPP). The chain is Isopentenyl-diphosphate Delta-isomerase from Corynebacterium efficiens (strain DSM 44549 / YS-314 / AJ 12310 / JCM 11189 / NBRC 100395).